A 240-amino-acid chain; its full sequence is Large ribosomal subunit protein bL25 (240 aa).

Disordered stretches follow at residues 1 to 21 (MAENVLSAQKRTEQGKGPARR) and 204 to 240 (GAAPAAGAAAPAGGAAPAAGAAPAKGGEAKGGDKAKK). Positions 204–229 (GAAPAAGAAAPAGGAAPAAGAAPAKG) are enriched in low complexity. Over residues 230–240 (GEAKGGDKAKK) the composition is skewed to basic and acidic residues.

This sequence belongs to the bacterial ribosomal protein bL25 family. CTC subfamily. In terms of assembly, part of the 50S ribosomal subunit; part of the 5S rRNA/L5/L18/L25 subcomplex. Contacts the 5S rRNA. Binds to the 5S rRNA independently of L5 and L18.

In terms of biological role, this is one of the proteins that binds to the 5S RNA in the ribosome where it forms part of the central protuberance. The sequence is that of Large ribosomal subunit protein bL25 from Anaeromyxobacter dehalogenans (strain 2CP-1 / ATCC BAA-258).